Reading from the N-terminus, the 142-residue chain is Interleukin-3 (142 aa).

Positions 1–18 are cleaved as a signal peptide; the sequence is MSHLPILLLLLLVSPGLQ. Residue Asn33 is glycosylated (N-linked (GlcNAc...) asparagine). A disulfide bridge links Cys34 with Cys102.

This sequence belongs to the IL-3 family. In terms of assembly, monomer. In terms of tissue distribution, activated T-cells, mast cells, natural killer cells.

It localises to the secreted. Granulocyte/macrophage colony-stimulating factors are cytokines that act in hematopoiesis by controlling the production, differentiation, and function of 2 related white cell populations of the blood, the granulocytes and the monocytes-macrophages. Functionally, this CSF induces granulocytes, macrophages, mast cells, stem cells, erythroid cells, eosinophils and megakaryocytes. This is Interleukin-3 (IL3) from Callithrix jacchus (White-tufted-ear marmoset).